A 209-amino-acid polypeptide reads, in one-letter code: Uracil phosphoribosyltransferase (209 aa).

Residues arginine 79, arginine 104, and aspartate 131–serine 139 each bind 5-phospho-alpha-D-ribose 1-diphosphate. Uracil contacts are provided by residues isoleucine 194 and glycine 199–alanine 201. Aspartate 200 contacts 5-phospho-alpha-D-ribose 1-diphosphate.

The protein belongs to the UPRTase family. Requires Mg(2+) as cofactor.

It carries out the reaction UMP + diphosphate = 5-phospho-alpha-D-ribose 1-diphosphate + uracil. It participates in pyrimidine metabolism; UMP biosynthesis via salvage pathway; UMP from uracil: step 1/1. Allosterically activated by GTP. Catalyzes the conversion of uracil and 5-phospho-alpha-D-ribose 1-diphosphate (PRPP) to UMP and diphosphate. In Delftia acidovorans (strain DSM 14801 / SPH-1), this protein is Uracil phosphoribosyltransferase.